Here is a 388-residue protein sequence, read N- to C-terminus: Glucose-6-phosphate/phosphate translocator 2, chloroplastic (388 aa).

The N-terminal 68 residues, 1–68 (MLSSIKPSSS…SASNFKREVK (68 aa)), are a transit peptide targeting the chloroplast. Helical transmembrane passes span 95–115 (LKIG…NIYN), 122–142 (FPYP…MMLV), 158–178 (FWKT…AATV), 211–231 (FPLP…LAAI), 233–253 (ELNF…AFVF), 281–301 (LVIL…AAGW), 305–325 (VSQV…FYHL), and 358–378 (IIIF…IAIF). Residues 113–231 (IYNKKVLNAF…IIGGCALAAI (119 aa)) form the EamA domain.

Belongs to the TPT transporter family. GPT (TC 2.A.7.9) subfamily. Expressed in seeds, flowers, stamens, and rosette leaves, with highest levels found in sepals and senescing leaves.

The protein localises to the plastid. It is found in the chloroplast membrane. Functionally, glucose 6-phosphate (Glc6P) transporter. Also transports inorganic phosphate, 3-phosphoglycerate, triose phosphates and, to a leser extent, phosphoenolpyruvate. Responsible for the transport of Glc6P into plastids of heterotrophic tissues where it can be used as a carbon source for starch biosynthesis, as substrate for fatty acid biosynthesis or as substrate for NADPH generation via the oxidative pentose phosphate pathway (OPPP). Required for dynamic acclimation of photosynthesis and partitioning of Glc6P between the chloroplast and the cytosol. May modulate the sensing of sugar status during early seedling development. The protein is Glucose-6-phosphate/phosphate translocator 2, chloroplastic of Arabidopsis thaliana (Mouse-ear cress).